Here is a 207-residue protein sequence, read N- to C-terminus: Ribosomal RNA small subunit methyltransferase G (207 aa).

S-adenosyl-L-methionine contacts are provided by residues glycine 73, leucine 78, 124-125 (VE), and arginine 139.

The protein belongs to the methyltransferase superfamily. RNA methyltransferase RsmG family.

It localises to the cytoplasm. It catalyses the reaction guanosine(527) in 16S rRNA + S-adenosyl-L-methionine = N(7)-methylguanosine(527) in 16S rRNA + S-adenosyl-L-homocysteine. In terms of biological role, specifically methylates the N7 position of guanine in position 527 of 16S rRNA. The sequence is that of Ribosomal RNA small subunit methyltransferase G from Shigella flexneri.